A 101-amino-acid chain; its full sequence is Urease subunit beta (101 aa).

The protein belongs to the urease beta subunit family. In terms of assembly, heterotrimer of UreA (gamma), UreB (beta) and UreC (alpha) subunits. Three heterotrimers associate to form the active enzyme.

The protein localises to the cytoplasm. The catalysed reaction is urea + 2 H2O + H(+) = hydrogencarbonate + 2 NH4(+). Its pathway is nitrogen metabolism; urea degradation; CO(2) and NH(3) from urea (urease route): step 1/1. This is Urease subunit beta from Burkholderia orbicola (strain AU 1054).